We begin with the raw amino-acid sequence, 378 residues long: Myoglobin (378 aa).

Position 2 is a blocked amino end (Ala) (A2). Residue H332 participates in heme binding.

This sequence belongs to the indoleamine 2,3-dioxygenase family. Homodimer. The cofactor is heme.

Functionally, serves a reserve supply of oxygen and facilitates the movement of oxygen within muscles. The chain is Myoglobin from Haliotis diversicolor (Abalone).